The sequence spans 486 residues: Secreted protein C (486 aa).

The first 22 residues, 1–22 (MKINIILLFVGLILAFAVLSNA), serve as a signal peptide directing secretion. The interval 30 to 332 (GVNPFDNNNS…SGSHGGSSSH (303 aa)) is disordered. A glycan (N-linked (GlcNAc...) asparagine) is linked at Asn-37. Positions 41–60 (SGSGSGSGGGSSSSGSGTGQ) are enriched in gly residues. The span at 61 to 318 (SSGTVSSSGS…TGSSEYSSSS (258 aa)) shows a compositional bias: low complexity. N-linked (GlcNAc...) asparagine glycosylation is found at Asn-73, Asn-74, Asn-83, Asn-112, Asn-129, Asn-149, and Asn-174.

Belongs to the Sct family.

Its subcellular location is the secreted. This chain is Secreted protein C, found in Dictyostelium discoideum (Social amoeba).